The following is a 205-amino-acid chain: Alpha-1-acid glycoprotein (205 aa).

A signal peptide spans 1 to 18; the sequence is MALHMVLVVLSLLPLLEA. N-linked (GlcNAc...) asparagine glycosylation is found at N25, N34, N76, N94, N104, and N134. C91 and C183 are oxidised to a cystine.

The protein belongs to the calycin superfamily. Lipocalin family.

It localises to the secreted. In terms of biological role, functions as a transport protein in the blood stream. Binds various ligands in the interior of its beta-barrel domain. Appears to function in modulating the activity of the immune system during the acute-phase reaction. In Rattus norvegicus (Rat), this protein is Alpha-1-acid glycoprotein (Orm1).